A 657-amino-acid chain; its full sequence is MDEKGGTTSWGTSGQPSPSYDSRGFTDSPHYSDHLNDSRKGTHEGLSPTPFSNSNLIGKTSGRGSFSLYSRDSGLSGCQSSLLRQELGLGSPAQLSSSGKPETPYYSFSATSSRRRPKHDSVALDPLQAKKVRKVPGLPSSVYRPSPNSDDFNRESPSYPSPKPPTSMFASTFFMQDGTHSSSDLWSSSNGMSQPGFGGILGTSTSHMSQSGSYGSLHSHDRLSYPPHSVSPTDINTSLPPMSSFHRGSTSSSPYVAASHTPPVNGSDSIVGTKGNGAGGSQTGDALGKALASIYSPDHTSSSFPSNPSTPVGSPSPLTGASQWSRSGGQAPSSPNYENSLHSLKNRVEQQLHEHLQDAMSFLKDVCEQSRMEDRLDRLDDAIHVLRNHAVGPSTSLSGGHGDIHSLLGPSHNGPIGSLNSSYGASSLVAANRQASMVAAHREESVSLNSNHAVLPSTVSAQSTELNHKTQESYRALSGGLQSQSVAIGPTEIKSEHKEKDENIHEPPSSDDMKSDDESSQKDIKVSSRGRTSSTNEDEDLNPEQKIEREKERRMANNARERLRVRDINEAFKELGRMCQLHLKSEKPQTKLLILHQAVAVILSLEQQVRERNLNPKAACLKRREEEKVSAVSAEPPTPHPGSHPGLSETTNPMGHM.

Residues 1–20 (MDEKGGTTSWGTSGQPSPSY) are compositionally biased toward polar residues. Disordered stretches follow at residues 1–76 (MDEK…SGLS), 89–285 (LGSP…QTGD), 297–340 (PDHT…YENS), 459–555 (VSAQ…ERRM), and 628–657 (KVSA…MGHM). A compositionally biased stretch (basic and acidic residues) spans 30–43 (HYSDHLNDSRKGTH). Polar residues-rich tracts occupy residues 49 to 70 (TPFS…SLYS) and 93 to 112 (AQLS…SATS). The interval 68 to 89 (LYSRDSGLSGCQSSLLRQELGL) is leucine-zipper. Positions 130 to 136 (KKVRKVP) match the Nuclear localization signal motif. Polar residues-rich tracts occupy residues 168–193 (MFAS…NGMS), 202–216 (GTST…SYGS), and 230–254 (VSPT…SSSP). Residues 300-311 (TSSSFPSNPSTP) are compositionally biased toward low complexity. A compositionally biased stretch (polar residues) spans 312–340 (VGSPSPLTGASQWSRSGGQAPSSPNYENS). Basic and acidic residues-rich tracts occupy residues 493–505 (IKSE…ENIH), 511–526 (DDMK…DIKV), and 543–555 (PEQK…ERRM). Positions 552–605 (ERRMANNARERLRVRDINEAFKELGRMCQLHLKSEKPQTKLLILHQAVAVILSL) constitute a bHLH domain. A class A specific domain region spans residues 607 to 630 (QQVRERNLNPKAACLKRREEEKVS). Residues 648 to 657 (SETTNPMGHM) show a composition bias toward polar residues.

Efficient DNA binding requires dimerization with another bHLH protein. Forms homo- or heterooligomers with myogenin, E12 and ITF2 proteins.

It localises to the nucleus. Transcriptional regulator. Involved in the initiation of neuronal differentiation. Activates transcription by binding to the E box-containing promoter. The protein is Transcription factor 12 (TCF12) of Gallus gallus (Chicken).